An 84-amino-acid polypeptide reads, in one-letter code: Delta-conotoxin-like Bt6.4 (84 aa).

The first 22 residues, 1–22 (MKLTCMVIVAVLFLTAWTSVMA), serve as a signal peptide directing secretion. The propeptide occupies 23 to 57 (DGSINRPDIAEGWQKFFSKARDEMKNRAASELNKR). Intrachain disulfides connect C58–C74, C65–C78, and C73–C82.

It belongs to the conotoxin O1 superfamily. In terms of tissue distribution, expressed by the venom duct.

It localises to the secreted. Its function is as follows. This toxin activates voltage-gated sodium channels. It shifts the voltage-dependence of activation to more hyperpolarized potentials but has only little effect on channel inactivation. It is active on Nav1.3/SCN3A (EC(50)=3.98 nM), Nav1.4/SCN4A (EC(50)=4.99 nM), Nav1.6/SCN8A (EC(50)=1.27 nM) and Nav1.7/SCN9A (EC(50)=2.42 nM) voltage-gated sodium channels. In vivo, it induces nocifensive or pain-like behaviors in mice when injected intraplantarly. The protein is Delta-conotoxin-like Bt6.4 of Conus betulinus (Beech cone).